The sequence spans 288 residues: ATP synthase gamma chain (288 aa).

This sequence belongs to the ATPase gamma chain family. F-type ATPases have 2 components, CF(1) - the catalytic core - and CF(0) - the membrane proton channel. CF(1) has five subunits: alpha(3), beta(3), gamma(1), delta(1), epsilon(1). CF(0) has three main subunits: a, b and c.

Its subcellular location is the cell inner membrane. Produces ATP from ADP in the presence of a proton gradient across the membrane. The gamma chain is believed to be important in regulating ATPase activity and the flow of protons through the CF(0) complex. This Polaromonas sp. (strain JS666 / ATCC BAA-500) protein is ATP synthase gamma chain.